The primary structure comprises 102 residues: NADH-quinone oxidoreductase subunit K (102 aa).

Transmembrane regions (helical) follow at residues 5–25 (LSHYLTVSAILFTLGVFGIFL), 31–51 (IVILMSVELILLAVNINMVAF), and 65–85 (LFILTVAAAEAAIGLAILVVF).

This sequence belongs to the complex I subunit 4L family. NDH-1 is composed of 14 different subunits. Subunits NuoA, H, J, K, L, M, N constitute the membrane sector of the complex.

Its subcellular location is the cell inner membrane. It catalyses the reaction a quinone + NADH + 5 H(+)(in) = a quinol + NAD(+) + 4 H(+)(out). Functionally, NDH-1 shuttles electrons from NADH, via FMN and iron-sulfur (Fe-S) centers, to quinones in the respiratory chain. The immediate electron acceptor for the enzyme in this species is believed to be ubiquinone. Couples the redox reaction to proton translocation (for every two electrons transferred, four hydrogen ions are translocated across the cytoplasmic membrane), and thus conserves the redox energy in a proton gradient. The sequence is that of NADH-quinone oxidoreductase subunit K from Rhizobium leguminosarum bv. trifolii (strain WSM2304).